The sequence spans 1836 residues: U3 small nucleolar RNA-associated protein 10 (1836 aa).

The stretch at 245 to 283 (EVVGFLLLPSKYETLRNIDVDTRLTAYSIIAVLASIIPI) is one HEAT 1 repeat. The tract at residues 453–473 (SNSSVRDSDDVEFDAGEEDNN) is disordered. A compositionally biased stretch (acidic residues) spans 461-473 (DDVEFDAGEEDNN). HEAT repeat units follow at residues 585–623 (PLDL…TTTS) and 813–850 (VENR…DQDL). The disordered stretch occupies residues 863 to 883 (QIPEQGPAKRRRRSSSSTKQA). 2 consecutive transmembrane segments (helical) span residues 998–1018 (LLLV…HSVM) and 1085–1105 (LFTY…LLFL). HEAT repeat units follow at residues 1333 to 1372 (ESVL…KFGA), 1749 to 1787 (ETLV…KMGE), and 1790 to 1828 (LTYL…NVLG).

Belongs to the HEATR1/UTP10 family. Component of the ribosomal small subunit (SSU) processome.

Its subcellular location is the nucleus. The protein localises to the nucleolus. It is found in the membrane. In terms of biological role, involved in nucleolar processing of pre-18S ribosomal RNA. Involved in ribosome biosynthesis. The sequence is that of U3 small nucleolar RNA-associated protein 10 from Scheffersomyces stipitis (strain ATCC 58785 / CBS 6054 / NBRC 10063 / NRRL Y-11545) (Yeast).